Here is a 194-residue protein sequence, read N- to C-terminus: dTTP/UTP pyrophosphatase (194 aa).

Residue Asp77 is the Proton acceptor of the active site.

Belongs to the Maf family. YhdE subfamily. It depends on a divalent metal cation as a cofactor.

The protein resides in the cytoplasm. It catalyses the reaction dTTP + H2O = dTMP + diphosphate + H(+). It carries out the reaction UTP + H2O = UMP + diphosphate + H(+). Nucleoside triphosphate pyrophosphatase that hydrolyzes dTTP and UTP. May have a dual role in cell division arrest and in preventing the incorporation of modified nucleotides into cellular nucleic acids. The protein is dTTP/UTP pyrophosphatase of Flavobacterium johnsoniae (strain ATCC 17061 / DSM 2064 / JCM 8514 / BCRC 14874 / CCUG 350202 / NBRC 14942 / NCIMB 11054 / UW101) (Cytophaga johnsonae).